Here is a 518-residue protein sequence, read N- to C-terminus: Xylose import ATP-binding protein XylG (518 aa).

2 consecutive ABC transporter domains span residues leucine 6–glutamate 245 and phenylalanine 262–proline 507. Glycine 38 to serine 45 is an ATP binding site.

The protein belongs to the ABC transporter superfamily. Xylose importer (TC 3.A.1.2.4) family. As to quaternary structure, the complex is composed of two ATP-binding proteins (XylG), two transmembrane proteins (XylH) and a solute-binding protein (XylF).

It is found in the cell inner membrane. It carries out the reaction D-xylose(out) + ATP + H2O = D-xylose(in) + ADP + phosphate + H(+). Functionally, part of the ABC transporter complex XylFGH involved in xylose import. Responsible for energy coupling to the transport system. The polypeptide is Xylose import ATP-binding protein XylG (Pseudomonas savastanoi pv. phaseolicola (strain 1448A / Race 6) (Pseudomonas syringae pv. phaseolicola (strain 1448A / Race 6))).